The primary structure comprises 155 residues: Cytochrome c-type biogenesis protein CcmE (155 aa).

Residues 1-8 (MNPIRKKR) lie on the Cytoplasmic side of the membrane. Residues 9–29 (LYWILALLCGVSIAMALALSA) form a helical; Signal-anchor for type II membrane protein membrane-spanning segment. Over 30–155 (LQENINLFYT…PKRVKQESTR (126 aa)) the chain is Periplasmic. Heme contacts are provided by H124 and Y128.

It belongs to the CcmE/CycJ family.

Its subcellular location is the cell inner membrane. Its function is as follows. Heme chaperone required for the biogenesis of c-type cytochromes. Transiently binds heme delivered by CcmC and transfers the heme to apo-cytochromes in a process facilitated by CcmF and CcmH. The sequence is that of Cytochrome c-type biogenesis protein CcmE from Janthinobacterium sp. (strain Marseille) (Minibacterium massiliensis).